Here is a 472-residue protein sequence, read N- to C-terminus: MSTREGSLWGGRFADGPSDALAALSKSTHFDWVLAPYDIVASRAHTVILYRAGLLSEEQRDGLLAGLDSLAEDVADGSFTPLVTDEDVHAALERGLIDRVGPDLGGRLRAGRSRNDQVATLFRMWLRDAVRRVAAGALDVVGALVAQAAAHPEAIMPGKTHLQSAQPVLLAHHLLAHAHPLLRDVDRIVDFDKRAAVSPYGSGALAGSSLGLDPDAIAAELGFASAADNSIDATASRDFAAEAAFVFAMIGVDLSRLAEDVILWSSTEFGYVKLHDAWSTGSSIMPQKKNPDIAELARGKSGRLIGNLAGLLATLKAQPLAYNRDLQEDKEPVFDAVAQLELVLPAMAGLVGSLTFDVQRMAALAPAGYTLATDIAEWLVRQGVPFRSAHEAAGAAVRAAEQRAVGLDELTDDELAAISPALTPQVREVLTIEGSVSSRDARGGTAPARVVEQIDTVAATAARLRERLGGPA.

It belongs to the lyase 1 family. Argininosuccinate lyase subfamily.

The protein localises to the cytoplasm. The enzyme catalyses 2-(N(omega)-L-arginino)succinate = fumarate + L-arginine. It functions in the pathway amino-acid biosynthesis; L-arginine biosynthesis; L-arginine from L-ornithine and carbamoyl phosphate: step 3/3. This chain is Argininosuccinate lyase, found in Mycobacterium avium (strain 104).